Consider the following 374-residue polypeptide: MDKGIILLAAGGTGGHLFPAEALAHELKASGYSVHLVTDSRAERFAGRFPADEIHVVASATIGSKNPVKLARSAWKLWTGLRAARRLISRLKPMAVVGFGGYPTVPPLLAATGMGVPTIIHEQNAVMGRANKMLASRVAAIAGGFLPEGTGAFAAKTVATGNPVRPAVLEAARVPYAPAGGDAPFHLVVFGGSQGAQFFSKAVPQAVCRLDDALRRRLKVTQQARPEDREGVIASYEKLDIPAEVSPFFTDMAGRIASAQLVICRSGASTVSEVSVIGRPAILVPYPYALDHDQAANAAALAAKGGARVIAQVELSAERLANILTDAMSNPDTLAQMAAGARQTGKAGAARLLALLVEAIASGSTVAKFKETRS.

UDP-N-acetyl-alpha-D-glucosamine-binding positions include T13–G15, N124, R165, S193, and Q294.

Belongs to the glycosyltransferase 28 family. MurG subfamily.

It localises to the cell inner membrane. The catalysed reaction is di-trans,octa-cis-undecaprenyl diphospho-N-acetyl-alpha-D-muramoyl-L-alanyl-D-glutamyl-meso-2,6-diaminopimeloyl-D-alanyl-D-alanine + UDP-N-acetyl-alpha-D-glucosamine = di-trans,octa-cis-undecaprenyl diphospho-[N-acetyl-alpha-D-glucosaminyl-(1-&gt;4)]-N-acetyl-alpha-D-muramoyl-L-alanyl-D-glutamyl-meso-2,6-diaminopimeloyl-D-alanyl-D-alanine + UDP + H(+). Its pathway is cell wall biogenesis; peptidoglycan biosynthesis. Cell wall formation. Catalyzes the transfer of a GlcNAc subunit on undecaprenyl-pyrophosphoryl-MurNAc-pentapeptide (lipid intermediate I) to form undecaprenyl-pyrophosphoryl-MurNAc-(pentapeptide)GlcNAc (lipid intermediate II). The polypeptide is UDP-N-acetylglucosamine--N-acetylmuramyl-(pentapeptide) pyrophosphoryl-undecaprenol N-acetylglucosamine transferase (Sinorhizobium medicae (strain WSM419) (Ensifer medicae)).